Consider the following 364-residue polypeptide: N-acetyl-gamma-glutamyl-phosphate reductase (364 aa).

The active site involves Cys157.

Belongs to the NAGSA dehydrogenase family. Type 1 subfamily.

The protein localises to the cytoplasm. It carries out the reaction N-acetyl-L-glutamate 5-semialdehyde + phosphate + NADP(+) = N-acetyl-L-glutamyl 5-phosphate + NADPH + H(+). It participates in amino-acid biosynthesis; L-arginine biosynthesis; N(2)-acetyl-L-ornithine from L-glutamate: step 3/4. In terms of biological role, catalyzes the NADPH-dependent reduction of N-acetyl-5-glutamyl phosphate to yield N-acetyl-L-glutamate 5-semialdehyde. The sequence is that of N-acetyl-gamma-glutamyl-phosphate reductase from Bifidobacterium animalis subsp. lactis (strain AD011).